The following is a 329-amino-acid chain: Peroxidase 50 (329 aa).

Positions 1-25 (MVVVNKTNLLLLLLSLCLTLDLSSA) are cleaved as a signal peptide. 4 disulfide bridges follow: C36-C119, C69-C74, C125-C325, and C204-C236. H67 (proton acceptor) is an active-site residue. Residues D68, V71, G73, D75, and S77 each coordinate Ca(2+). Position 167 (P167) interacts with substrate. H197 contributes to the heme b binding site. T198 serves as a coordination point for Ca(2+). N215 carries an N-linked (GlcNAc...) asparagine glycan. Positions 249, 252, and 257 each coordinate Ca(2+).

Belongs to the peroxidase family. Classical plant (class III) peroxidase subfamily. It depends on heme b as a cofactor. The cofactor is Ca(2+). In terms of tissue distribution, expressed in roots and leaves.

The protein resides in the secreted. It carries out the reaction 2 a phenolic donor + H2O2 = 2 a phenolic radical donor + 2 H2O. Functionally, removal of H(2)O(2), oxidation of toxic reductants, biosynthesis and degradation of lignin, suberization, auxin catabolism, response to environmental stresses such as wounding, pathogen attack and oxidative stress. These functions might be dependent on each isozyme/isoform in each plant tissue. Exhibits a Ca(2+)-pectate binding affinity which could be interpreted in vivo as a specificity to interact with the pectic structure of the cell wall. In Arabidopsis thaliana (Mouse-ear cress), this protein is Peroxidase 50 (PER50).